A 374-amino-acid polypeptide reads, in one-letter code: MSNQHTLLTSNLLPVGSNISTWWNFGSMLLTCLMLQITTGFFLAIHYTANINLAFSSVIHITRDVPYGWIIQNTHAMGASMFFICIYMHIARGLYYGLYLNKMVWLSGVSLLITLMATAFFGYVLPWGQMSFWAATVITNLLTAIPYLGTVVTTWLWGGFSINDPTLTRFFALHFILPFIIISLSSIHIILLHNEGSNNPLGTNSDTDKIPFHPYHSYKDMLMTTILISILFYILSFTPNLFNDPENFTKANPMITPQHIKPEWYFLFAYGILRSIPNKLGGALALLLSIIILTSAPFTHTSHTRSMMFRPLAQILFWILATAFITITWTATKPVEPPFITISQWTSTLYFSFFMINPMLGLIENKITNTNTNT.

Helical transmembrane passes span 25 to 45 (FGSM…FLAI), 69 to 90 (WIIQ…YMHI), 105 to 125 (WLSG…GYVL), and 170 to 190 (FFAL…IHII). Positions 75 and 89 each coordinate heme b. His-174 and His-188 together coordinate heme b. An a ubiquinone-binding site is contributed by His-193. The next 4 membrane-spanning stretches (helical) occupy residues 218–238 (YKDM…LSFT), 280–300 (LGGA…PFTH), 312–332 (LAQI…WTAT), and 339–358 (FITI…MINP).

It belongs to the cytochrome b family. The cytochrome bc1 complex contains 3 respiratory subunits (MT-CYB, CYC1 and UQCRFS1), 2 core proteins (UQCRC1 and UQCRC2) and probably 6 low-molecular weight proteins. Heme b is required as a cofactor.

The protein resides in the mitochondrion inner membrane. Its function is as follows. Component of the ubiquinol-cytochrome c reductase complex (complex III or cytochrome b-c1 complex) that is part of the mitochondrial respiratory chain. The b-c1 complex mediates electron transfer from ubiquinol to cytochrome c. Contributes to the generation of a proton gradient across the mitochondrial membrane that is then used for ATP synthesis. The sequence is that of Cytochrome b (MT-CYB) from Calliophis bivirgatus (Blue Malaysian coral snake).